We begin with the raw amino-acid sequence, 588 residues long: Probable G-protein coupled receptor 162 (588 aa).

The Extracellular portion of the chain corresponds to 1 to 17 (MARGGAGAEEASLRSNA). The helical transmembrane segment at 18–38 (LSWLACGLLALLANAWIILSI) threads the bilayer. Residues 39 to 49 (SAKQQKHKPLE) lie on the Cytoplasmic side of the membrane. Residues 50 to 70 (LLLCFLAGTHILMAAVPLTTF) form a helical membrane-spanning segment. Residues 71 to 91 (AVVQLRRQASSDYDWNESICK) lie on the Extracellular side of the membrane. An N-linked (GlcNAc...) asparagine glycan is attached at asparagine 86. The helical transmembrane segment at 92 to 112 (VFVSTYYTLALATCFTVASLS) threads the bilayer. Topologically, residues 113–133 (YHRMWMVRWPVNYRLSNAKKQ) are cytoplasmic. The chain crosses the membrane as a helical span at residues 134 to 154 (ALHAVMGIWMVSFILSTLPSI). The Extracellular portion of the chain corresponds to 155–174 (GWHNNGERYYARGCQFIVSK). Residues 175 to 195 (IGLGFGVCFSLLLLGGIVMGL) form a helical membrane-spanning segment. The Cytoplasmic segment spans residues 196–275 (VCVAITFYQT…SLQVTNLVSA (80 aa)). Residues 276-296 (IVFLYDSLTGVPILVVSFFSL) traverse the membrane as a helical segment. Residues 297–303 (KSDSAPP) lie on the Extracellular side of the membrane. The chain crosses the membrane as a helical span at residues 304–324 (WMVLAVLWCSMAQTLLLPSFI). The Cytoplasmic segment spans residues 325 to 588 (WSCERYRADV…GNPIFPQLTL (264 aa)). 2 positions are modified to phosphoserine: serine 413 and serine 435. 2 disordered regions span residues 445–474 (QSRA…AEGG) and 511–550 (ETPL…AVGL). Low complexity predominate over residues 530–546 (PLGLSPRRLSLGSPESR).

It belongs to the G-protein coupled receptor 1 family.

It localises to the cell membrane. In terms of biological role, orphan receptor. In Homo sapiens (Human), this protein is Probable G-protein coupled receptor 162 (GPR162).